We begin with the raw amino-acid sequence, 89 residues long: Rho beta-crystallin (89 aa).

His31 contributes to the substrate binding site.

It belongs to the aldo/keto reductase family. Monomer.

This chain is Rho beta-crystallin, found in Lepidodactylus lugubris (Mourning gecko).